The sequence spans 172 residues: NADH-ubiquinone oxidoreductase chain 6 (172 aa).

Transmembrane regions (helical) follow at residues 1-21 (MLSL…VVVL), 25-45 (PYFS…IVLY), 48-68 (GTFL…VVFV), 86-106 (VIWF…MSFN), 108-128 (FFLD…IFGA), and 141-161 (LILV…LVVV).

Belongs to the complex I subunit 6 family.

The protein localises to the mitochondrion membrane. The catalysed reaction is a ubiquinone + NADH + 5 H(+)(in) = a ubiquinol + NAD(+) + 4 H(+)(out). Core subunit of the mitochondrial membrane respiratory chain NADH dehydrogenase (Complex I) that is believed to belong to the minimal assembly required for catalysis. Complex I functions in the transfer of electrons from NADH to the respiratory chain. The immediate electron acceptor for the enzyme is believed to be ubiquinone. The sequence is that of NADH-ubiquinone oxidoreductase chain 6 (MT-ND6) from Petromyzon marinus (Sea lamprey).